The sequence spans 1464 residues: Gag-Pol polyprotein (1464 aa).

G2 carries the N-myristoyl glycine; by host lipid modification. The interaction with Gp41 stretch occupies residues 7–31; the sequence is VLRGKKADELEKIRLRPSGKKKYRL. The Nuclear export signal motif lies at 16-22; sequence LEKIRLR. Positions 26 to 32 match the Nuclear localization signal motif; sequence KKKYRLK. Residues 108 to 146 are disordered; sequence LGAETGTAEKMPSTSRPTAPPSGRGRNFPVQQTGGGNYI. The interaction with human PPIA/CYPA and NUP153 stretch occupies residues 192–229; the sequence is NCVGDHQAAMQIIREIINDEAADWDAQHPIPGPLPAGQ. A dimerization/Multimerization of capsid protein p24 region spans residues 280–366; sequence YNPTNILDVK…GGPGQKARLM (87 aa). CCHC-type zinc fingers lie at residues 390–407 and 411–428; these read IRCW…QCRA and QGCW…KCPE. Residues 434–509 are disordered; that stretch reads LRDGSMGKEA…GKSTSQRGDR (76 aa). A compositionally biased stretch (low complexity) spans 459 to 468; it reads STPSRSSSGS. Basic and acidic residues predominate over residues 477 to 492; that stretch reads ERAEGAEGETIQRGDG. Residues 514–518 are dimerization of protease; it reads PQFSL. Residues 533–602 enclose the Peptidase A2 domain; that stretch reads VEVLLDTGAD…TPINIFGRNI (70 aa). D538 functions as the For protease activity; shared with dimeric partner in the catalytic mechanism. Dimerization of protease stretches follow at residues 562-568 and 601-613; these read GIGGFIN and NILT…LNLP. One can recognise a Reverse transcriptase domain in the interval 656 to 846; sequence EGQLEEAPPT…PPLQWMGYEL (191 aa). Positions 722, 797, and 798 each coordinate Mg(2+). Residues 839 to 847 are RT 'primer grip'; it reads LQWMGYELW. The short motif at 1009 to 1025 is the Tryptophan repeat motif element; it reads WEQWWDNYWQVTWIPEW. One can recognise an RNase H type-1 domain in the interval 1045-1168; sequence IPGAETFYTD…VDHLVSQGIR (124 aa). D1054, E1089, D1109, and D1160 together coordinate Mg(2+). Residues 1174–1215 form an Integrase-type zinc finger; it reads ERIEPAQEEHEKYHSNMKELTHKFGIPQLVARQIVNTCAQCQ. Residues H1183, H1187, C1211, and C1214 each coordinate Zn(2+). The Integrase catalytic domain maps to 1224–1375; the sequence is QVNAEIGVWQ…TPAERLINMI (152 aa). Mg(2+)-binding residues include D1235, D1287, and E1323. A DNA-binding region (integrase-type) is located at residues 1394 to 1441; it reads FQVYYREGRDQLWKGPGELLWKGDGAVIVKVGADIKVIPRRKAKIIRD.

Homotrimer; further assembles as hexamers of trimers. Interacts with gp41 (via C-terminus). Interacts with host CALM1; this interaction induces a conformational change in the Matrix protein, triggering exposure of the myristate group. Interacts with host AP3D1; this interaction allows the polyprotein trafficking to multivesicular bodies during virus assembly. Part of the pre-integration complex (PIC) which is composed of viral genome, matrix protein, Vpr and integrase. In terms of assembly, homodimer; the homodimer further multimerizes as homohexamers or homopentamers. Interacts with human PPIA/CYPA. Interacts with human NUP153. Interacts with host PDZD8; this interaction stabilizes the capsid. Interacts with monkey TRIM5; this interaction destabilizes the capsid. As to quaternary structure, homodimer, whose active site consists of two apposed aspartic acid residues. Heterodimer of p66 RT and p51 RT (RT p66/p51). Heterodimerization of RT is essential for DNA polymerase activity. The overall folding of the subdomains is similar in p66 RT and p51 RT but the spatial arrangements of the subdomains are dramatically different. In terms of assembly, homotetramer; may further associate as a homohexadecamer. Part of the pre-integration complex (PIC) which is composed of viral genome, matrix protein, Vpr and integrase. Interacts with human SMARCB1/INI1 and human PSIP1/LEDGF isoform 1. Interacts with human KPNA3; this interaction might play a role in nuclear import of the pre-integration complex. Interacts with human NUP153; this interaction might play a role in nuclear import of the pre-integration complex. It depends on Mg(2+) as a cofactor. In terms of processing, specific enzymatic cleavages by the viral protease yield mature proteins. The protease is released by autocatalytic cleavage. The polyprotein is cleaved during and after budding, this process is termed maturation. Proteolytic cleavage of p66 RT removes the RNase H domain to yield the p51 RT subunit. Nucleocapsid protein p7 might be further cleaved after virus entry.

Its subcellular location is the host cell membrane. It localises to the host endosome. The protein resides in the host multivesicular body. It is found in the virion membrane. The protein localises to the host nucleus. Its subcellular location is the host cytoplasm. It localises to the virion. The enzyme catalyses Endopeptidase for which the P1 residue is preferably hydrophobic.. It carries out the reaction Endohydrolysis of RNA in RNA/DNA hybrids. Three different cleavage modes: 1. sequence-specific internal cleavage of RNA. Human immunodeficiency virus type 1 and Moloney murine leukemia virus enzymes prefer to cleave the RNA strand one nucleotide away from the RNA-DNA junction. 2. RNA 5'-end directed cleavage 13-19 nucleotides from the RNA end. 3. DNA 3'-end directed cleavage 15-20 nucleotides away from the primer terminus.. The catalysed reaction is 3'-end directed exonucleolytic cleavage of viral RNA-DNA hybrid.. It catalyses the reaction DNA(n) + a 2'-deoxyribonucleoside 5'-triphosphate = DNA(n+1) + diphosphate. Its activity is regulated as follows. Protease: The viral protease is inhibited by many synthetic protease inhibitors (PIs), such as amprenavir, atazanavir, indinavir, loprinavir, nelfinavir, ritonavir and saquinavir. Use of protease inhibitors in tritherapy regimens permit more ambitious therapeutic strategies. Reverse transcriptase/ribonuclease H: RT can be inhibited either by nucleoside RT inhibitors (NRTIs) or by non nucleoside RT inhibitors (NNRTIs). NRTIs act as chain terminators, whereas NNRTIs inhibit DNA polymerization by binding a small hydrophobic pocket near the RT active site and inducing an allosteric change in this region. Classical NRTIs are abacavir, adefovir (PMEA), didanosine (ddI), lamivudine (3TC), stavudine (d4T), tenofovir (PMPA), zalcitabine (ddC), and zidovudine (AZT). Classical NNRTIs are atevirdine (BHAP U-87201E), delavirdine, efavirenz (DMP-266), emivirine (I-EBU), and nevirapine (BI-RG-587). The tritherapies used as a basic effective treatment of AIDS associate two NRTIs and one NNRTI. In terms of biological role, mediates, with Gag polyprotein, the essential events in virion assembly, including binding the plasma membrane, making the protein-protein interactions necessary to create spherical particles, recruiting the viral Env proteins, and packaging the genomic RNA via direct interactions with the RNA packaging sequence (Psi). Gag-Pol polyprotein may regulate its own translation, by the binding genomic RNA in the 5'-UTR. At low concentration, the polyprotein would promote translation, whereas at high concentration, the polyprotein would encapsidate genomic RNA and then shut off translation. Its function is as follows. Targets the polyprotein to the plasma membrane via a multipartite membrane-binding signal, that includes its myristoylated N-terminus. Matrix protein is part of the pre-integration complex. Implicated in the release from host cell mediated by Vpu. Binds to RNA. Forms the conical core that encapsulates the genomic RNA-nucleocapsid complex in the virion. Most core are conical, with only 7% tubular. The core is constituted by capsid protein hexamer subunits. The core is disassembled soon after virion entry. Host restriction factors such as TRIM5-alpha or TRIMCyp bind retroviral capsids and cause premature capsid disassembly, leading to blocks in reverse transcription. Capsid restriction by TRIM5 is one of the factors which restricts HIV-1 to the human species. Host PIN1 apparently facilitates the virion uncoating. On the other hand, interactions with PDZD8 or CYPA stabilize the capsid. Functionally, encapsulates and protects viral dimeric unspliced genomic RNA (gRNA). Binds these RNAs through its zinc fingers. Acts as a nucleic acid chaperone which is involved in rearangement of nucleic acid secondary structure during gRNA retrotranscription. Also facilitates template switch leading to recombination. As part of the polyprotein, participates in gRNA dimerization, packaging, tRNA incorporation and virion assembly. In terms of biological role, aspartyl protease that mediates proteolytic cleavages of Gag and Gag-Pol polyproteins during or shortly after the release of the virion from the plasma membrane. Cleavages take place as an ordered, step-wise cascade to yield mature proteins. This process is called maturation. Displays maximal activity during the budding process just prior to particle release from the cell. Also cleaves Nef and Vif, probably concomitantly with viral structural proteins on maturation of virus particles. Hydrolyzes host EIF4GI and PABP1 in order to shut off the capped cellular mRNA translation. The resulting inhibition of cellular protein synthesis serves to ensure maximal viral gene expression and to evade host immune response. Its function is as follows. Multifunctional enzyme that converts the viral RNA genome into dsDNA in the cytoplasm, shortly after virus entry into the cell. This enzyme displays a DNA polymerase activity that can copy either DNA or RNA templates, and a ribonuclease H (RNase H) activity that cleaves the RNA strand of RNA-DNA heteroduplexes in a partially processive 3' to 5' endonucleasic mode. Conversion of viral genomic RNA into dsDNA requires many steps. A tRNA(3)-Lys binds to the primer-binding site (PBS) situated at the 5'-end of the viral RNA. RT uses the 3' end of the tRNA primer to perform a short round of RNA-dependent minus-strand DNA synthesis. The reading proceeds through the U5 region and ends after the repeated (R) region which is present at both ends of viral RNA. The portion of the RNA-DNA heteroduplex is digested by the RNase H, resulting in a ssDNA product attached to the tRNA primer. This ssDNA/tRNA hybridizes with the identical R region situated at the 3' end of viral RNA. This template exchange, known as minus-strand DNA strong stop transfer, can be either intra- or intermolecular. RT uses the 3' end of this newly synthesized short ssDNA to perform the RNA-dependent minus-strand DNA synthesis of the whole template. RNase H digests the RNA template except for two polypurine tracts (PPTs) situated at the 5'-end and near the center of the genome. It is not clear if both polymerase and RNase H activities are simultaneous. RNase H probably can proceed both in a polymerase-dependent (RNA cut into small fragments by the same RT performing DNA synthesis) and a polymerase-independent mode (cleavage of remaining RNA fragments by free RTs). Secondly, RT performs DNA-directed plus-strand DNA synthesis using the PPTs that have not been removed by RNase H as primers. PPTs and tRNA primers are then removed by RNase H. The 3' and 5' ssDNA PBS regions hybridize to form a circular dsDNA intermediate. Strand displacement synthesis by RT to the PBS and PPT ends produces a blunt ended, linear dsDNA copy of the viral genome that includes long terminal repeats (LTRs) at both ends. Catalyzes viral DNA integration into the host chromosome, by performing a series of DNA cutting and joining reactions. This enzyme activity takes place after virion entry into a cell and reverse transcription of the RNA genome in dsDNA. The first step in the integration process is 3' processing. This step requires a complex comprising the viral genome, matrix protein, Vpr and integrase. This complex is called the pre-integration complex (PIC). The integrase protein removes 2 nucleotides from each 3' end of the viral DNA, leaving recessed CA OH's at the 3' ends. In the second step, the PIC enters cell nucleus. This process is mediated through integrase and Vpr proteins, and allows the virus to infect a non dividing cell. This ability to enter the nucleus is specific of lentiviruses, other retroviruses cannot and rely on cell division to access cell chromosomes. In the third step, termed strand transfer, the integrase protein joins the previously processed 3' ends to the 5' ends of strands of target cellular DNA at the site of integration. The 5'-ends are produced by integrase-catalyzed staggered cuts, 5 bp apart. A Y-shaped, gapped, recombination intermediate results, with the 5'-ends of the viral DNA strands and the 3' ends of target DNA strands remaining unjoined, flanking a gap of 5 bp. The last step is viral DNA integration into host chromosome. This involves host DNA repair synthesis in which the 5 bp gaps between the unjoined strands are filled in and then ligated. Since this process occurs at both cuts flanking the HIV genome, a 5 bp duplication of host DNA is produced at the ends of HIV-1 integration. Alternatively, Integrase may catalyze the excision of viral DNA just after strand transfer, this is termed disintegration. This Homo sapiens (Human) protein is Gag-Pol polyprotein (gag-pol).